The following is a 23-amino-acid chain: Septenin 2b (23 aa).

As to expression, expressed in skin glands.

The protein localises to the secreted. Its function is as follows. May act as an antimicrobial peptide. The protein is Septenin 2b of Osteopilus septentrionalis (Cuban treefrog).